Reading from the N-terminus, the 150-residue chain is UPF0756 membrane protein HI_1074 (150 aa).

A run of 4 helical transmembrane segments spans residues 1–21, 52–72, 81–101, and 123–143; these read MTLQLNTIALLLVILLILGVL, YGVKIGIIILTIGVLSPLVSG, GFLSWKMALSISVGVLVAWLA, and IIGVAFLGGIPVGPLIAAGIL.

This sequence belongs to the UPF0756 family.

The protein localises to the cell membrane. The protein is UPF0756 membrane protein HI_1074 of Haemophilus influenzae (strain ATCC 51907 / DSM 11121 / KW20 / Rd).